The sequence spans 85 residues: Large ribosomal subunit protein bL27 (85 aa).

Belongs to the bacterial ribosomal protein bL27 family.

The sequence is that of Large ribosomal subunit protein bL27 from Campylobacter curvus (strain 525.92).